We begin with the raw amino-acid sequence, 546 residues long: Medium-chain-fatty-acid--CoA ligase (546 aa).

T185 serves as a coordination point for Mg(2+). ATP-binding residues include W235 and T329. E330 contacts Mg(2+). Residues D417, K434, K438, and W443 each contribute to the ATP site.

The protein belongs to the ATP-dependent AMP-binding enzyme family.

Its subcellular location is the cytoplasm. The catalysed reaction is a medium-chain fatty acid + ATP + CoA = a medium-chain fatty acyl-CoA + AMP + diphosphate. It functions in the pathway lipid metabolism; fatty acid metabolism. This is Medium-chain-fatty-acid--CoA ligase from Ectopseudomonas oleovorans (Pseudomonas oleovorans).